The sequence spans 101 residues: ATP-dependent Clp protease adapter protein ClpS (101 aa).

The tract at residues 1-24 (MVVASAPAKPGSVGQQESASRDAT) is disordered. Polar residues predominate over residues 13 to 23 (VGQQESASRDA).

Belongs to the ClpS family. Binds to the N-terminal domain of the chaperone ClpA.

In terms of biological role, involved in the modulation of the specificity of the ClpAP-mediated ATP-dependent protein degradation. This is ATP-dependent Clp protease adapter protein ClpS from Mycobacterium marinum (strain ATCC BAA-535 / M).